Here is a 313-residue protein sequence, read N- to C-terminus: Ribosomal RNA small subunit methyltransferase H (313 aa).

S-adenosyl-L-methionine-binding positions include 33–35 (GGH), Asp-53, Phe-80, Asp-101, and Gln-108. Residues 282-313 (LVHNKPLTPSEAEIEQNPRARSAKLRVAQKLA) form a disordered region.

The protein belongs to the methyltransferase superfamily. RsmH family.

The protein resides in the cytoplasm. The enzyme catalyses cytidine(1402) in 16S rRNA + S-adenosyl-L-methionine = N(4)-methylcytidine(1402) in 16S rRNA + S-adenosyl-L-homocysteine + H(+). Specifically methylates the N4 position of cytidine in position 1402 (C1402) of 16S rRNA. This Magnetococcus marinus (strain ATCC BAA-1437 / JCM 17883 / MC-1) protein is Ribosomal RNA small subunit methyltransferase H.